Reading from the N-terminus, the 498-residue chain is Fascin-3 (498 aa).

Belongs to the fascin family. As to expression, expressed in testis.

It localises to the cytoplasm. It is found in the cytoskeleton. In terms of biological role, acts as an actin bundling protein. This Homo sapiens (Human) protein is Fascin-3 (FSCN3).